Consider the following 255-residue polypeptide: 5'-nucleotidase SurE (255 aa).

The a divalent metal cation site is built by Asp8, Asp9, Ser40, and Asn93.

This sequence belongs to the SurE nucleotidase family. A divalent metal cation is required as a cofactor.

Its subcellular location is the cytoplasm. The catalysed reaction is a ribonucleoside 5'-phosphate + H2O = a ribonucleoside + phosphate. Functionally, nucleotidase that shows phosphatase activity on nucleoside 5'-monophosphates. The polypeptide is 5'-nucleotidase SurE (Bradyrhizobium sp. (strain ORS 278)).